The primary structure comprises 347 residues: Isopentenyl-diphosphate delta-isomerase (347 aa).

9-10 (RK) is a substrate binding site. FMN contacts are provided by residues 65–67 (AMT), S95, and N124. 95–97 (STH) serves as a coordination point for substrate. Q154 contributes to the substrate binding site. Mg(2+) is bound at residue E155. Residues K186, S211, T216, 262–264 (GVR), and 283–284 (SR) each bind FMN.

The protein belongs to the IPP isomerase type 2 family. As to quaternary structure, homooctamer. Dimer of tetramers. Requires FMN as cofactor. NADPH serves as cofactor. The cofactor is Mg(2+).

It localises to the cytoplasm. The enzyme catalyses isopentenyl diphosphate = dimethylallyl diphosphate. Involved in the biosynthesis of isoprenoids. Catalyzes the 1,3-allylic rearrangement of the homoallylic substrate isopentenyl (IPP) to its allylic isomer, dimethylallyl diphosphate (DMAPP). In Staphylococcus saprophyticus subsp. saprophyticus (strain ATCC 15305 / DSM 20229 / NCIMB 8711 / NCTC 7292 / S-41), this protein is Isopentenyl-diphosphate delta-isomerase.